The following is a 1368-amino-acid chain: DNA-directed RNA polymerase subunit beta (1368 aa).

It belongs to the RNA polymerase beta chain family. As to quaternary structure, the RNAP catalytic core consists of 2 alpha, 1 beta, 1 beta' and 1 omega subunit. When a sigma factor is associated with the core the holoenzyme is formed, which can initiate transcription.

The enzyme catalyses RNA(n) + a ribonucleoside 5'-triphosphate = RNA(n+1) + diphosphate. In terms of biological role, DNA-dependent RNA polymerase catalyzes the transcription of DNA into RNA using the four ribonucleoside triphosphates as substrates. The polypeptide is DNA-directed RNA polymerase subunit beta (Burkholderia multivorans (strain ATCC 17616 / 249)).